The sequence spans 287 residues: Ethanolamine ammonia-lyase small subunit (287 aa).

Adenosylcob(III)alamin contacts are provided by V168, E189, and C218.

Belongs to the EutC family. As to quaternary structure, the basic unit is a heterodimer which dimerizes to form tetramers. The heterotetramers trimerize; 6 large subunits form a core ring with 6 small subunits projecting outwards. It depends on adenosylcob(III)alamin as a cofactor.

It localises to the bacterial microcompartment. The enzyme catalyses ethanolamine = acetaldehyde + NH4(+). Its pathway is amine and polyamine degradation; ethanolamine degradation. Its function is as follows. Catalyzes the deamination of various vicinal amino-alcohols to oxo compounds. Allows this organism to utilize ethanolamine as the sole source of nitrogen and carbon in the presence of external vitamin B12. The sequence is that of Ethanolamine ammonia-lyase small subunit from Pseudomonas syringae pv. tomato (strain ATCC BAA-871 / DC3000).